Here is a 180-residue protein sequence, read N- to C-terminus: Large ribosomal subunit protein uL6 (180 aa).

This sequence belongs to the universal ribosomal protein uL6 family. Part of the 50S ribosomal subunit.

In terms of biological role, this protein binds to the 23S rRNA, and is important in its secondary structure. It is located near the subunit interface in the base of the L7/L12 stalk, and near the tRNA binding site of the peptidyltransferase center. The protein is Large ribosomal subunit protein uL6 of Anaeromyxobacter sp. (strain Fw109-5).